The primary structure comprises 256 residues: MKISRIAQRLDEAAVSGKATPQLTGDDAVTVREAAEIQRLLIAHRIERGARQVGLKMGFTSRAKMAQMGVSDLIWGRLTSDMWVEEGGEIDLAHYVHPRVEPEICYLLGKRLEGNVTPLEALAAVEAVAPAMEIIDSRYRDFKFSLPDVIADNASSSGFVVGAWHKPETDVSNLGMVMSFDGRAVELGTSAAILGSPIRALVAAARLAAQQGEALEAGSLILAGAATAAVALRPGISVRCEVQNLGSLSFSTTGER.

The protein belongs to the hydratase/decarboxylase family. In terms of assembly, forms a complex with AmnF. The cofactor is Mg(2+). Mn(2+) serves as cofactor.

The catalysed reaction is (3E)-2-oxohex-3-enedioate + H(+) = 2-oxopent-4-enoate + CO2. Strongly inhibited by Fe(2+), Fe(3+), K(3)[Fe(CN)(6)], Ag(+) and Cu(2+). Functionally, involved in the modified meta-cleavage pathway for the 2-aminophenol catabolism. The sequence is that of 4-oxalocrotonate decarboxylase (amnE) from Pseudomonas sp.